The primary structure comprises 295 residues: MNLEPINNALSHLRMLRSSVGQVFETLGNGVRAEHGEEGKEQKFLQELQELLNGVNSNLREFETCINDLTPPQAPFNLANTAYLSLETNLERQALYPHLVQSYKWHDKLHEYSTFASVLLQQNSLKRSYYTNTKRRRSLPSSHLATPQTVDNLIGSIHFPNMNLKIVRPFMTNAILHITIARVLRAAVILKGLLIEWVTVKGFDESLLDGVDEHWTVSRHQVFRKVQDHAHSAMLHFFSPTLPDLAIRSFITWFRSYLTLFADPCKKCGKHLHNTLPPTWRDLRTLEPYHEECKQ.

It belongs to the Mediator complex subunit 27 family. As to quaternary structure, component of the Mediator complex.

It is found in the nucleus. Its function is as follows. Component of the Mediator complex, a coactivator involved in the regulated transcription of nearly all RNA polymerase II-dependent genes. Mediator functions as a bridge to convey information from gene-specific regulatory proteins to the basal RNA polymerase II transcription machinery. Mediator is recruited to promoters by direct interactions with regulatory proteins and serves as a scaffold for the assembly of a functional preinitiation complex with RNA polymerase II and the general transcription factors. This is Mediator of RNA polymerase II transcription subunit 27 (MED27) from Aedes aegypti (Yellowfever mosquito).